The sequence spans 208 residues: Protein-L-isoaspartate O-methyltransferase (208 aa).

S59 is an active-site residue.

It belongs to the methyltransferase superfamily. L-isoaspartyl/D-aspartyl protein methyltransferase family.

The protein resides in the cytoplasm. The enzyme catalyses [protein]-L-isoaspartate + S-adenosyl-L-methionine = [protein]-L-isoaspartate alpha-methyl ester + S-adenosyl-L-homocysteine. Catalyzes the methyl esterification of L-isoaspartyl residues in peptides and proteins that result from spontaneous decomposition of normal L-aspartyl and L-asparaginyl residues. It plays a role in the repair and/or degradation of damaged proteins. This is Protein-L-isoaspartate O-methyltransferase from Salmonella arizonae (strain ATCC BAA-731 / CDC346-86 / RSK2980).